The primary structure comprises 276 residues: 3' cyclic ADP-D-ribose synthase HopAM1 (276 aa).

The span at 20–38 shows a compositional bias: polar residues; it reads VEASQVKSAGTSSTTNIDS. The tract at residues 20 to 39 is disordered; it reads VEASQVKSAGTSSTTNIDSK. Residues 165–214 are TIR domain; the sequence is KNGIAHAKKMAFFITPEWLGSDFCKQEFQWLSETKNKDIKSAFVIFKDVD. The active site involves Gln-190.

In terms of assembly, homodimer.

The protein localises to the host cytoplasm. It localises to the host cytosol. It catalyses the reaction NAD(+) = 3'cADPR + nicotinamide + H(+). Functionally, NAD(+) hydrolase (NADase) that cleaves NAD(+) into nicotinamide and 3' cyclic ADP-D-ribose (3'cADPR, v2-cADPR). Upon infiltration of A.thaliana with this bacteria an effector-triggered immunity-like phenotype (ETI-like, cell death with severe chlorosis) is seen, 3'cADPR levels rise while NAD(+) levels remain constant. Plant immune responses are suppressed. Triggers hypersensitive response-like cell death in Nicotiana tabacum cv. Xanthi and N.benthamiana when transiently expressed, depletes NAD(+) in N.benthamiana. Causes cell death upon induction in yeast due to NAD(+) depletion and/or 3'cADPR itself. Transgenic A.thaliana expressing HopAM1 suppresses its plant immune system upon challenge; the plants produce 3'cADPR without significantly depleting NAD(+). The polypeptide is 3' cyclic ADP-D-ribose synthase HopAM1 (Pseudomonas syringae pv. tomato (strain ATCC BAA-871 / DC3000)).